Consider the following 157-residue polypeptide: Homeobox protein DBX2 (157 aa).

A DNA-binding region (homeobox) is located at residues 9 to 68 (GILRRAVFSEDQRKALEKMFQKQKYISKTDRKKLAINLGLKESQVKIWFQNRRMKWRNSK). The interval 105–157 (SQEQTSPRWKEKSPGNSERLTSTQPPPRANSSQSPLYLYPDHDTANKAVTSSD) is disordered. A compositionally biased stretch (polar residues) spans 118–139 (PGNSERLTSTQPPPRANSSQSP).

It belongs to the H2.0 homeobox family. As to expression, localized to the central nervous system during embryogenesis. It is found restricted to the rostro-caudal and dorso-ventral regions of the hindbrain. In the ventricular zone of the spinal cord, it localizes to the dorsal part of the basal plate. In the adult, it is detected in ovary.

Its subcellular location is the nucleus. Its function is as follows. Appears to perform a very early function in establishing the identity of a subset of cells that originate in the region of the ventricular zone in the developing spinal cord and in the hindbrain. The sequence is that of Homeobox protein DBX2 (DBX2) from Gallus gallus (Chicken).